An 855-amino-acid chain; its full sequence is DNA mismatch repair protein MutS (855 aa).

617–624 (GPNMGGKS) contacts ATP.

Belongs to the DNA mismatch repair MutS family.

Functionally, this protein is involved in the repair of mismatches in DNA. It is possible that it carries out the mismatch recognition step. This protein has a weak ATPase activity. The chain is DNA mismatch repair protein MutS from Baumannia cicadellinicola subsp. Homalodisca coagulata.